Here is a 578-residue protein sequence, read N- to C-terminus: XK-related protein 6 (578 aa).

7 helical membrane passes run 86-106, 114-134, 253-273, 307-327, 348-368, 377-397, and 410-430; these read WIVL…WLAV, FLWS…VQIL, WLQC…LASY, VLSL…FVVL, WEEV…WFNV, MVAY…LWYA, and LALC…VLYY.

It belongs to the XK family.

The protein localises to the cell membrane. The sequence is that of XK-related protein 6 (xkr6) from Tetraodon nigroviridis (Spotted green pufferfish).